The chain runs to 87 residues: Retinal rod rhodopsin-sensitive cGMP 3',5'-cyclic phosphodiesterase subunit gamma (87 aa).

Met-1 carries the N-acetylmethionine modification. A compositionally biased stretch (basic and acidic residues) spans 1-12; that stretch reads MNLEPPKGEIRS. The disordered stretch occupies residues 1–55; it reads MNLEPPKGEIRSATRVIGGPVTPRKGPPKFKQRQTRQFKSKPPKKGVQGFGDDIP. Residues 26 to 44 show a composition bias toward basic residues; it reads GPPKFKQRQTRQFKSKPPK.

The protein belongs to the rod/cone cGMP-PDE gamma subunit family. In terms of assembly, oligomer composed of two catalytic chains (alpha and beta), an inhibitory chain (gamma) and the delta chain.

It carries out the reaction 3',5'-cyclic GMP + H2O = GMP + H(+). Participates in processes of transmission and amplification of the visual signal. cGMP-PDEs are the effector molecules in G-protein-mediated phototransduction in vertebrate rods and cones. The sequence is that of Retinal rod rhodopsin-sensitive cGMP 3',5'-cyclic phosphodiesterase subunit gamma (Pde6g) from Mus musculus (Mouse).